A 983-amino-acid chain; its full sequence is Ephrin type-A receptor 3 (983 aa).

The signal sequence occupies residues 1 to 20 (MDCQLSILLLLSCSVLDSFG). The Extracellular segment spans residues 21-541 (ELIPQPSNEV…SFSISGESSQ (521 aa)). An Eph LBD domain is found at 29–207 (EVNLLDSKTI…YFKKCPFTVK (179 aa)). N232, N337, N391, N404, and N493 each carry an N-linked (GlcNAc...) asparagine glycan. 2 consecutive Fibronectin type-III domains span residues 325–435 (PPSS…TNQA) and 436–531 (APSP…TSPD). The chain crosses the membrane as a helical span at residues 542–565 (VVMIAISAAVAIILLTVVIYVLIG). At 566–983 (RFCGYKSKHG…TQSKNGPVPV (418 aa)) the chain is on the cytoplasmic side. Phosphotyrosine; by autocatalysis occurs at positions 596 and 602. The Protein kinase domain maps to 621 to 882 (ISIDKVVGAG…QIVSILDKLI (262 aa)). Residues 628–633 (GAGEFG), K653, and 700–706 (EYMENGS) each bind ATP. Y701 carries the post-translational modification Phosphotyrosine; by autocatalysis. The active-site Proton acceptor is the D746. 750–751 (RN) contributes to the ATP binding site. Position 779 is a phosphotyrosine; by autocatalysis (Y779). Residues 911–975 (TTFRTTGDWL…ISSIKALETQ (65 aa)) enclose the SAM domain. Y937 carries the post-translational modification Phosphotyrosine. The short motif at 981–983 (VPV) is the PDZ-binding element.

The protein belongs to the protein kinase superfamily. Tyr protein kinase family. Ephrin receptor subfamily. Heterotetramer upon binding of the ligand. The heterotetramer is composed of an ephrin dimer and a receptor dimer. Oligomerization is probably required to induce biological responses. Forms a ternary EFNA5-EPHA3-ADAM10 complex mediating EFNA5 extracellular domain shedding by ADAM10 which regulates the EFNA5-EPHA3 complex internalization and function. Interacts with NCK1 (via SH2 domain); mediates EFNA5-EPHA3 signaling. Interacts (phosphorylated) with PTPN1; dephosphorylates EPHA3 and may regulate its trafficking and function. Interacts (phosphorylated) with CRK; mediates EFNA5-EPHA3 signaling through RHOA GTPase activation. In terms of processing, autophosphorylates upon activation by EFNA5. Phosphorylation on Tyr-602 mediates interaction with NCK1. Dephosphorylated by PTPN1. As to expression, widely expressed. Highest level in placenta.

Its subcellular location is the cell membrane. The protein localises to the secreted. It catalyses the reaction L-tyrosyl-[protein] + ATP = O-phospho-L-tyrosyl-[protein] + ADP + H(+). Its function is as follows. Receptor tyrosine kinase which binds promiscuously membrane-bound ephrin family ligands residing on adjacent cells, leading to contact-dependent bidirectional signaling into neighboring cells. The signaling pathway downstream of the receptor is referred to as forward signaling while the signaling pathway downstream of the ephrin ligand is referred to as reverse signaling. Highly promiscuous for ephrin-A ligands it binds preferentially EFNA5. Upon activation by EFNA5 regulates cell-cell adhesion, cytoskeletal organization and cell migration. Plays a role in cardiac cells migration and differentiation and regulates the formation of the atrioventricular canal and septum during development probably through activation by EFNA1. Involved in the retinotectal mapping of neurons. May also control the segregation but not the guidance of motor and sensory axons during neuromuscular circuit development. The polypeptide is Ephrin type-A receptor 3 (EPHA3) (Homo sapiens (Human)).